The sequence spans 117 residues: Large ribosomal subunit protein uL22 (117 aa).

It belongs to the universal ribosomal protein uL22 family. As to quaternary structure, part of the 50S ribosomal subunit.

Its function is as follows. This protein binds specifically to 23S rRNA; its binding is stimulated by other ribosomal proteins, e.g. L4, L17, and L20. It is important during the early stages of 50S assembly. It makes multiple contacts with different domains of the 23S rRNA in the assembled 50S subunit and ribosome. In terms of biological role, the globular domain of the protein is located near the polypeptide exit tunnel on the outside of the subunit, while an extended beta-hairpin is found that lines the wall of the exit tunnel in the center of the 70S ribosome. The chain is Large ribosomal subunit protein uL22 from Leptospira biflexa serovar Patoc (strain Patoc 1 / ATCC 23582 / Paris).